The primary structure comprises 372 residues: SAM domain-containing protein SAMSN-1 (372 aa).

The interval 1-71 (MLKRKPSNAS…SGGSLGKKVR (71 aa)) is disordered. The Important for interaction with 14-3-3 proteins signature appears at 20-25 (RSSSFG). 2 positions are modified to phosphoserine: Ser-23 and Ser-34. The segment covering 37-49 (KSDDSIEVHDREL) has biased composition (basic and acidic residues). Residues 52–63 (GSEEQSKTSSSG) show a composition bias toward low complexity. Ser-74 carries the post-translational modification Phosphoserine. At Thr-76 the chain carries Phosphothreonine. Phosphoserine occurs at positions 90, 97, and 119. The interval 90 to 111 (SEEKEEESGEEALPYRNSDPMI) is disordered. Residues 129 to 146 (LYSGQSSSSGITSCSDGT) show a composition bias toward low complexity. Residues 129 to 153 (LYSGQSSSSGITSCSDGTSNRDSFR) form a disordered region. Tyr-160 is subject to Phosphotyrosine. Residues 163–224 (PFCGRAKVHT…KFIYVDVILE (62 aa)) enclose the SH3 domain. One can recognise an SAM domain in the interval 241-305 (ENHQTIQEFL…LSAAESLLDE (65 aa)). The tract at residues 304–372 (DEETTVEHEK…QKIAITESSD (69 aa)) is disordered. Positions 317 to 329 (PLSSNPDILSASQ) are enriched in polar residues.

As to quaternary structure, interacts with FASLG. Interacts with phosphotyrosine containing proteins. Interacts (via SH3 domain) with CTTN. Interacts (phosphorylated at Ser-23) with YWHAB, YWHAE, YWHAG, YWHAH, YWHAZ and SFN. Interacts directly with SAP30 and HDAC1. Identified in a complex with SAP30 and HDAC1. Detected in spleen and lymph node (at protein level).

The protein resides in the nucleus. Its subcellular location is the cytoplasm. It localises to the cell projection. It is found in the ruffle. Negative regulator of B-cell activation. Down-regulates cell proliferation (in vitro). Promotes RAC1-dependent membrane ruffle formation and reorganization of the actin cytoskeleton. Regulates cell spreading and cell polarization. Stimulates HDAC1 activity. Regulates LYN activity by modulating its tyrosine phosphorylation. The chain is SAM domain-containing protein SAMSN-1 (Samsn1) from Mus musculus (Mouse).